A 187-amino-acid chain; its full sequence is Elongation factor P (187 aa).

This sequence belongs to the elongation factor P family.

It is found in the cytoplasm. It participates in protein biosynthesis; polypeptide chain elongation. Its function is as follows. Involved in peptide bond synthesis. Stimulates efficient translation and peptide-bond synthesis on native or reconstituted 70S ribosomes in vitro. Probably functions indirectly by altering the affinity of the ribosome for aminoacyl-tRNA, thus increasing their reactivity as acceptors for peptidyl transferase. In Helicobacter pylori (strain G27), this protein is Elongation factor P.